The following is a 204-amino-acid chain: Putative glutathione S-transferase alpha-3 (204 aa).

Thr2 carries the post-translational modification N-acetylthreonine. The 78-residue stretch at 2-79 (TKPQLSYFKV…YIASQHDFVG (78 aa)) folds into the GST N-terminal domain. Residues Tyr8, 49–50 (QL), and 63–64 (QS) each bind glutathione. Residues 81 to 202 (TPEEKALVDE…YLKNRPITER (122 aa)) form the GST C-terminal domain.

This sequence belongs to the GST superfamily. Alpha family.

It carries out the reaction RX + glutathione = an S-substituted glutathione + a halide anion + H(+). Its function is as follows. Conjugation of reduced glutathione to a wide number of exogenous and endogenous hydrophobic electrophiles. The protein is Putative glutathione S-transferase alpha-3 (gsta3) of Dictyostelium discoideum (Social amoeba).